A 161-amino-acid polypeptide reads, in one-letter code: IVVPRTMEDLDLQKVAGTWHSMAMAASDISLLDSETAPLRVYIQELRPTPQDNLEIVLRKWEDGRCAEQKVLAEKTEVPAEFKINYVEENQIFLLDTDYDNYLFFCEMNADAPQQSLMCQCLARTLEVDNEVMEKFNRALKTLPVHMQLLNPTQAEEQCLI.

Disulfide bonds link C66–C159 and C106–C119.

The protein belongs to the calycin superfamily. Lipocalin family. In terms of assembly, monomer. In terms of tissue distribution, synthesized in mammary gland and secreted in milk.

The protein localises to the secreted. Its function is as follows. Primary component of whey, it binds retinol and is probably involved in the transport of that molecule. The sequence is that of Beta-lactoglobulin-1 (LGB1) from Canis lupus familiaris (Dog).